The sequence spans 134 residues: Large-conductance mechanosensitive channel (134 aa).

Transmembrane regions (helical) follow at residues 16–36 (VVDM…VSSF) and 76–96 (GVFL…FIAV).

Belongs to the MscL family. In terms of assembly, homopentamer.

The protein localises to the cell inner membrane. In terms of biological role, channel that opens in response to stretch forces in the membrane lipid bilayer. May participate in the regulation of osmotic pressure changes within the cell. The sequence is that of Large-conductance mechanosensitive channel from Thioalkalivibrio sulfidiphilus (strain HL-EbGR7).